Consider the following 376-residue polypeptide: Cytochrome c oxidase subunit 2, mitochondrial (376 aa).

Residues 164–184 traverse the membrane as a helical segment; the sequence is IFFFLVQILVFVLWVLSRALW. Residues 185 to 204 are Mitochondrial matrix-facing; it reads CFRSKISPIPQRIVHGTTIE. The helical transmembrane segment at 205 to 225 threads the bilayer; it reads ILWTILPSIILMFIAIPSFTL. Residues 226 to 376 are Mitochondrial intermembrane-facing; that stretch reads LYSMDDVVVD…YGSWVSNQIQ (151 aa). Residues His-309, Cys-344, Glu-346, Cys-348, His-352, and Met-355 each coordinate Cu cation. A Mg(2+)-binding site is contributed by Glu-346.

The protein belongs to the cytochrome c oxidase subunit 2 family. In terms of assembly, component of the cytochrome c oxidase (complex IV, CIV), a multisubunit enzyme composed of a catalytic core of 3 subunits and several supernumerary subunits. The complex exists as a monomer or a dimer and forms supercomplexes (SCs) in the inner mitochondrial membrane with ubiquinol-cytochrome c oxidoreductase (cytochrome b-c1 complex, complex III, CIII). Cu cation serves as cofactor.

It is found in the mitochondrion inner membrane. It carries out the reaction 4 Fe(II)-[cytochrome c] + O2 + 8 H(+)(in) = 4 Fe(III)-[cytochrome c] + 2 H2O + 4 H(+)(out). Component of the cytochrome c oxidase, the last enzyme in the mitochondrial electron transport chain which drives oxidative phosphorylation. The respiratory chain contains 3 multisubunit complexes succinate dehydrogenase (complex II, CII), ubiquinol-cytochrome c oxidoreductase (cytochrome b-c1 complex, complex III, CIII) and cytochrome c oxidase (complex IV, CIV), that cooperate to transfer electrons derived from NADH and succinate to molecular oxygen, creating an electrochemical gradient over the inner membrane that drives transmembrane transport and the ATP synthase. Cytochrome c oxidase is the component of the respiratory chain that catalyzes the reduction of oxygen to water. Electrons originating from reduced cytochrome c in the intermembrane space (IMS) are transferred via the dinuclear copper A center (CU(A)) of subunit 2 and heme A of subunit 1 to the active site in subunit 1, a binuclear center (BNC) formed by heme A3 and copper B (CU(B)). The BNC reduces molecular oxygen to 2 water molecules using 4 electrons from cytochrome c in the IMS and 4 protons from the mitochondrial matrix. The protein is Cytochrome c oxidase subunit 2, mitochondrial (COX2) of Vigna unguiculata (Cowpea).